A 371-amino-acid polypeptide reads, in one-letter code: Leu/Ile/Val-binding protein homolog 1 (371 aa).

The signal sequence occupies residues 1 to 23 (MRKTLFSGVALAAVIAFGGSAWA).

It belongs to the leucine-binding protein family.

Its function is as follows. Component of an amino-acid transport system. The chain is Leu/Ile/Val-binding protein homolog 1 from Brucella suis biovar 1 (strain 1330).